Here is a 262-residue protein sequence, read N- to C-terminus: Putative 1-acyl-sn-glycerol-3-phosphate acyltransferase acl-1 (262 aa).

The next 3 membrane-spanning stretches (helical) occupy residues 3 to 23 (FLAI…PVIG), 29 to 49 (VYFG…SIPF), and 89 to 109 (IIIA…AWPV). The short motif at 94–99 (HQSALD) is the HXXXXD motif element.

Belongs to the 1-acyl-sn-glycerol-3-phosphate acyltransferase family.

The protein localises to the membrane. It catalyses the reaction a 1-acyl-sn-glycero-3-phosphate + an acyl-CoA = a 1,2-diacyl-sn-glycero-3-phosphate + CoA. It participates in phospholipid metabolism; CDP-diacylglycerol biosynthesis; CDP-diacylglycerol from sn-glycerol 3-phosphate: step 2/3. Functionally, converts lysophosphatidic acid (LPA) into phosphatidic acid by incorporating an acyl moiety at the sn-2 position of the glycerol backbone. This Caenorhabditis elegans protein is Putative 1-acyl-sn-glycerol-3-phosphate acyltransferase acl-1 (acl-1).